The chain runs to 262 residues: uncharacterized protein (262 aa).

The region spanning 6-70 (LRINQFLAHY…LKNKKFSVLV (65 aa)) is the S4 RNA-binding domain. The Nucleophile role is filled by Asp108.

Belongs to the pseudouridine synthase RsuA family.

It catalyses the reaction a uridine in RNA = a pseudouridine in RNA. This is an uncharacterized protein from Helicobacter pylori (strain ATCC 700392 / 26695) (Campylobacter pylori).